The chain runs to 1444 residues: MDLARSDIIPHLLCLFQEIIQANIQKVSEAYDLELKIMNILTLWRNGSDNLISDNDDYMKKGLFFSRSNDPLALQARYAQMYDDLFKLNNYKVPDDVVRKHDTKILDIILKESSVPFWYDISDDEAHESMLPEFRLQDIHEFRLNLKRVAVVPDESEEIQMDESQSDKRRRKKRMEKSRPVWLSGSENDRRIELNDSLKPSQKFETKLSSYLLNRLMNEMNPHYCGHPLPALFVTLIMLKAYSLKNKFFSYGIRYMELVCNEIGGPDLNTRTFPVLFGSDGSFVGTRVYSHYPIKLRMILNDLTYLLTYSDLHKFQEFELDVNDEVLLHMLHSPNDGRQLKKAVTRLNLYYGLKFNPKTTDCGVVNGMDFTHKHPITKTADFTSPVLPMTNSFNKAEICYGHSSKILNRAVFTDTVRGYIREDLKNVADLDLPKLHEHVSKLVDMRVNYTIIYDLMFLRVMLNLGGYSRSNQITDFRKTIDEITKMNEDFLSGADPEKNIDILNAWMAPTMEDCGYRLTKSILFGKFRKAKYPSDLEAKSNIDYYVTARSAGIGNLRISIETDKRKYKVRTTSKSAFVNAMGSGILDVNPVSNEPMMLTDYLLTQTPETRANLEAAIDSGSISDSELMRILGQNSIGSRSTTAWRPVRPIYINVLQAHLAQAFIIGPHINATVNQHESQPTSLWFTGDDLGVGFATLYQNGTADIIAPAIEASSTGKALSVLADCSSWDQTFLTATIIPYYNGIKKALLEYQQADMRNFYMIDSSRTGVPGMKLSEIVDWFNSFQTKRIFNASYLKERHSFVVKYMWSGRLDTFFMNSVQNALITRRIAEEVSLKVSNTGLSWFQVAGDDAIMVYDGSSISTTEQVTRVNEITVRNYEESNHIINPQKTVISHISGEYAKIYYYAGMHFRDPSIQLHESEKDSGASDVTESLRGFGQVIYEYNKRAIGTLRVNALYGRLIAGLAYSVNVRRYDASKRTYANMKYYPPPTSVIAPAAFKGGLGLSFTGLSLNEVLFIKMHLHEAVSQGLHVISMISFEANEVVSNSLSAYYLKDQKDLLRDMKLGKHLEKVKGISFKSSDLAFSGSDFSQGLNLKRESIDKVKLEVSRKSIRDLRSSGISVPSTHAYENLPYASLHQSFKSLKVDRDTSKFTNERLLVSLLEYKSDIPRVSVTSQYPVYDLINISKVDELNVRSGGPVRFISTPIEGKLLEENIGTRQGVQFKNRGYGGSQEVLHFIRSNGLVITEQALIDLIIKSGVLLMINPQRGLIDLFQSLSGDTASSMHLANFFMAEKPHWEDNAISLTIAGSLLENCDSRIENVKNFVSVLATGMQKDLQRMFYYVGFVYYAQRLIWSGGHSSKIFVSIDEDKLADFLRGSKPITRRRKAMAGTKREPINLSANFSYEISEPDREISEYDPLVLCHPLSMPFFGNWQEKYSVMQSDEQM.

A disordered region spans residues 157-181; that stretch reads EEIQMDESQSDKRRRKKRMEKSRPV. The RdRp catalytic domain maps to 690-897; that stretch reads LGVGFATLYQ…KTVISHISGE (208 aa).

This sequence belongs to the reoviridae RNA-directed RNA polymerase family.

It localises to the virion. The protein resides in the host cytoplasm. It catalyses the reaction RNA(n) + a ribonucleoside 5'-triphosphate = RNA(n+1) + diphosphate. Functionally, RNA-directed RNA polymerase that is involved in both transcription and genome replication. Together with the capping enzyme P5 and protein P7, forms an enzyme complex positioned near the channels situated at each of the five-fold vertices of the core. In Rice dwarf virus (isolate Akita) (RDV), this protein is RNA-directed RNA polymerase P1.